A 50-amino-acid chain; its full sequence is Fungus-induced-related protein 15 (50 aa).

The first 21 residues, 1 to 21 (MNFYSLFVFIALIFSFNVVHG), serve as a signal peptide directing secretion.

In terms of biological role, may have role in hypoxia response. The protein is Fungus-induced-related protein 15 (fipr-15) of Caenorhabditis elegans.